A 316-amino-acid polypeptide reads, in one-letter code: Phospho-N-acetylmuramoyl-pentapeptide-transferase (316 aa).

10 helical membrane-spanning segments follow: residues isoleucine 5–proline 25, glycine 49–phenylalanine 69, leucine 76–leucine 96, phenylalanine 116–phenylalanine 136, threonine 141–valine 161, glycine 172–leucine 192, isoleucine 195–leucine 212, isoleucine 221–leucine 241, leucine 244–isoleucine 264, and valine 296–serine 316.

The protein belongs to the glycosyltransferase 4 family. MraY subfamily. Requires Mg(2+) as cofactor.

Its subcellular location is the cell membrane. It catalyses the reaction UDP-N-acetyl-alpha-D-muramoyl-L-alanyl-gamma-D-glutamyl-meso-2,6-diaminopimeloyl-D-alanyl-D-alanine + di-trans,octa-cis-undecaprenyl phosphate = di-trans,octa-cis-undecaprenyl diphospho-N-acetyl-alpha-D-muramoyl-L-alanyl-D-glutamyl-meso-2,6-diaminopimeloyl-D-alanyl-D-alanine + UMP. It participates in cell wall biogenesis; peptidoglycan biosynthesis. Catalyzes the initial step of the lipid cycle reactions in the biosynthesis of the cell wall peptidoglycan: transfers peptidoglycan precursor phospho-MurNAc-pentapeptide from UDP-MurNAc-pentapeptide onto the lipid carrier undecaprenyl phosphate, yielding undecaprenyl-pyrophosphoryl-MurNAc-pentapeptide, known as lipid I. The chain is Phospho-N-acetylmuramoyl-pentapeptide-transferase from Thermoanaerobacter pseudethanolicus (strain ATCC 33223 / 39E) (Clostridium thermohydrosulfuricum).